Reading from the N-terminus, the 1989-residue chain is Exophilin-5 (1989 aa).

Residues 7–63 (AFDFSFLNDEEARKILQVLERNEELQRAEKDRISKLQKTKRDIRWLQGVTGEWFEEI) enclose the RabBD domain. 2 disordered regions span residues 93–117 (NDPIELPTSRSKNVTNQKKPTPFSS) and 348–391 (TQSK…FLRA). Polar residues-rich tracts occupy residues 100–111 (TSRSKNVTNQKK) and 359–376 (HQQSPKRTPLSSIIWNRS). Basic and acidic residues predominate over residues 377–389 (DSSRDRENQEEFL). S603 carries the post-translational modification Phosphoserine. Disordered regions lie at residues 631-651 (FSQISDDRRNPQSPNLQNPTV), 806-827 (STASLPFIQEHRTPPSFPRTDQ), and 882-933 (AALP…NQKN). Residues 641 to 651 (PQSPNLQNPTV) are compositionally biased toward polar residues. S806 and S809 each carry phosphoserine. Residues 891-909 (KNSSLDAPVVPSTTVFSRR) show a composition bias toward polar residues. Residues 910–927 (SPSDKDPSLGEREEKDNA) are compositionally biased toward basic and acidic residues. 2 positions are modified to phosphoserine: S1028 and S1086. Disordered regions lie at residues 1094-1113 (EATERMTNVKSSGSTSVRKG), 1124-1152 (SCPSGEPHASTGREGRKKPLTSGMDASEL), and 1365-1493 (EIFS…TNCQ). Positions 1098 to 1110 (RMTNVKSSGSTSV) are enriched in polar residues. Position 1124 is a phosphoserine (S1124). The segment covering 1379–1390 (SENKKERGKKLQ) has biased composition (basic and acidic residues). Over residues 1416–1431 (SINSSNSGPSSLPALS) the composition is skewed to low complexity. A compositionally biased stretch (polar residues) spans 1434-1447 (NIGNSQTRRSSWEC). S1505 is subject to Phosphoserine. Disordered regions lie at residues 1521 to 1590 (EETQ…NRSS) and 1644 to 1737 (PEPT…PITF). Basic and acidic residues-rich tracts occupy residues 1551–1560 (ESRKAEDEMQ), 1573–1589 (NKNKTNLDDLVKGENRS), and 1658–1670 (RLSENGKHVKKSE). A compositionally biased stretch (polar residues) spans 1685–1709 (THVSNQKSNSISQRHQNEFKNVSES). A phosphoserine mark is found at S1753, S1768, S1821, and S1851. The tract at residues 1921–1989 (FLKDDLRNPP…LDENDKESEL (69 aa)) is disordered. Residues 1933-1943 (SESLSSNSPSS) show a composition bias toward low complexity. Residues 1959–1989 (YEDDPVDSDCDTDTTTDDEYYLDENDKESEL) are compositionally biased toward acidic residues.

In terms of assembly, interacts with RAB27A. Expressed in keratinocytes.

In terms of biological role, may act as Rab effector protein and play a role in vesicle trafficking. This chain is Exophilin-5, found in Homo sapiens (Human).